The sequence spans 341 residues: MSGETFFLSNHSVAASQIAALAGLSFVTEDFAISAAGALATAGIGEICYMDDTKYIEELKVTRASACLISPRFKELVPGGTFSFVTPHPYAIYAQVLALLYPEATIPASNFGTNGISSKANIHASAIVGHGVTIDPGASVGPNARIGGFTCIGSNAVIGPSVRIGRNCYIGANVTVAYAVVGDRVIIHPGTSIGQDGFGFTFLGGKWVKVPQVGGVIIQDDVEVGANTTIDRGSMRATVIGEGTKLDNLVQVAHNVTIGAHCVIAAQVGIAGSTTIGDFVAIGGHAGIAPHLTIGEKAQIGGASGVMCDIPAGERWVGLPARPSRAFFRQFAALKRLAKKK.

Histidine 254 (proton acceptor) is an active-site residue.

It belongs to the transferase hexapeptide repeat family. LpxD subfamily. In terms of assembly, homotrimer.

The enzyme catalyses a UDP-3-O-[(3R)-3-hydroxyacyl]-alpha-D-glucosamine + a (3R)-hydroxyacyl-[ACP] = a UDP-2-N,3-O-bis[(3R)-3-hydroxyacyl]-alpha-D-glucosamine + holo-[ACP] + H(+). It functions in the pathway bacterial outer membrane biogenesis; LPS lipid A biosynthesis. Catalyzes the N-acylation of UDP-3-O-acylglucosamine using 3-hydroxyacyl-ACP as the acyl donor. Is involved in the biosynthesis of lipid A, a phosphorylated glycolipid that anchors the lipopolysaccharide to the outer membrane of the cell. The protein is UDP-3-O-acylglucosamine N-acyltransferase 2 of Nitrobacter winogradskyi (strain ATCC 25391 / DSM 10237 / CIP 104748 / NCIMB 11846 / Nb-255).